Here is a 179-residue protein sequence, read N- to C-terminus: ATP-dependent protease subunit HslV (179 aa).

Thr-7 is a catalytic residue. Residues Gly-162, Cys-165, and Thr-168 each contribute to the Na(+) site.

The protein belongs to the peptidase T1B family. HslV subfamily. In terms of assembly, a double ring-shaped homohexamer of HslV is capped on each side by a ring-shaped HslU homohexamer. The assembly of the HslU/HslV complex is dependent on binding of ATP.

It localises to the cytoplasm. The enzyme catalyses ATP-dependent cleavage of peptide bonds with broad specificity.. With respect to regulation, allosterically activated by HslU binding. Functionally, protease subunit of a proteasome-like degradation complex believed to be a general protein degrading machinery. The chain is ATP-dependent protease subunit HslV from Bordetella petrii (strain ATCC BAA-461 / DSM 12804 / CCUG 43448).